Consider the following 432-residue polypeptide: Benzoyl-CoA reductase subunit B (432 aa).

The protein belongs to the FldB/FldC dehydratase alpha/beta subunit family. As to quaternary structure, heterotetramer composed of A, B, C, and D subunits. It depends on iron-sulfur cluster as a cofactor. An oxidized flavin is required as a cofactor.

It carries out the reaction cyclohexa-1,5-diene-1-carbonyl-CoA + oxidized 2[4Fe-4S]-[ferredoxin] + 2 ADP + 2 phosphate = reduced 2[4Fe-4S]-[ferredoxin] + benzoyl-CoA + 2 ATP + 2 H2O. The enzyme catalyses 3-hydroxybenzoyl-CoA + AH2 + 2 ATP + 2 H2O = 3-hydroxycyclohexa-1,5-diene-1-carbonyl-CoA + A + 2 ADP + 2 phosphate + 2 H(+). Functionally, catalyzes the anaerobic reduction of benzoyl-CoA and 3-hydroxybenzoyl-CoA to form cyclohexa-1,5-diene-1-carbonyl-CoA and 3-hydroxycyclohexa-1,5-diene-1-carbonyl-CoA, respectively. The enzyme also reduces other benzoyl-CoA analogs with small substituents at the aromatic ring. The chain is Benzoyl-CoA reductase subunit B (bcrB) from Thauera aromatica.